A 145-amino-acid polypeptide reads, in one-letter code: Superoxide dismutase [Cu-Zn] (145 aa).

Cu cation-binding residues include His37, His39, and His54. Cysteines 48 and 137 form a disulfide. Zn(2+) is bound by residues His54, His62, His71, and Asp74. His111 is a Cu cation binding site.

Belongs to the Cu-Zn superoxide dismutase family. As to quaternary structure, homodimer. Cu cation is required as a cofactor. The cofactor is Zn(2+).

Its subcellular location is the cytoplasm. It catalyses the reaction 2 superoxide + 2 H(+) = H2O2 + O2. Destroys radicals which are normally produced within the cells and which are toxic to biological systems. This Drosophila busckii (Fruit fly) protein is Superoxide dismutase [Cu-Zn].